A 156-amino-acid polypeptide reads, in one-letter code: Small ribosomal subunit protein uS7 (156 aa).

It belongs to the universal ribosomal protein uS7 family. Part of the 30S ribosomal subunit. Contacts proteins S9 and S11.

One of the primary rRNA binding proteins, it binds directly to 16S rRNA where it nucleates assembly of the head domain of the 30S subunit. Is located at the subunit interface close to the decoding center, probably blocks exit of the E-site tRNA. The protein is Small ribosomal subunit protein uS7 of Alkalilimnicola ehrlichii (strain ATCC BAA-1101 / DSM 17681 / MLHE-1).